Consider the following 118-residue polypeptide: UPF0342 protein BPUM_0928 (118 aa).

This sequence belongs to the UPF0342 family.

The sequence is that of UPF0342 protein BPUM_0928 from Bacillus pumilus (strain SAFR-032).